The sequence spans 716 residues: Phospholipid phosphatase-related protein type 3 (716 aa).

3 helical membrane passes run 18 to 38 (LPCF…SLYF), 70 to 90 (LIPL…SIMV), and 131 to 151 (FVGV…VIQL). N167 carries N-linked (GlcNAc...) asparagine glycosylation. The next 3 helical transmembrane spans lie at 205 to 225 (HATL…SVIS), 231 to 251 (LKPI…LTQI), and 261 to 281 (VYAG…HAVG). A disordered region spans residues 311 to 334 (SMYQQNKSVSTDELGPPGRLEGVP). A compositionally biased stretch (polar residues) spans 312 to 321 (MYQQNKSVST). The N-linked (GlcNAc...) asparagine glycan is linked to N316. Phosphoserine occurs at positions 320 and 351. T374 carries the post-translational modification Phosphothreonine. The disordered stretch occupies residues 416–488 (GRGLGLPDEA…RVILPPRPGP (73 aa)). S426 carries the phosphoserine modification. The segment covering 437–460 (VAEEEEEEEEEEEEEEEEEEEEEG) has biased composition (acidic residues). A Phosphoserine modification is found at S506. The disordered stretch occupies residues 548–589 (AMSKAAGGPKAETASSSSASSDSSQYRSPSDRDSASIVTIDA). A compositionally biased stretch (low complexity) spans 562–575 (SSSSASSDSSQYRS). Position 641 is a phosphoserine (S641). Positions 664–694 (GEGLPPPGASEGALGAGSRESTLRRQVGALG) are disordered.

This sequence belongs to the PA-phosphatase related phosphoesterase family.

The protein resides in the membrane. The sequence is that of Phospholipid phosphatase-related protein type 3 from Rattus norvegicus (Rat).